The following is a 560-amino-acid chain: DNA ligase B (560 aa).

The active-site N6-AMP-lysine intermediate is K124.

This sequence belongs to the NAD-dependent DNA ligase family. LigB subfamily.

It catalyses the reaction NAD(+) + (deoxyribonucleotide)n-3'-hydroxyl + 5'-phospho-(deoxyribonucleotide)m = (deoxyribonucleotide)n+m + AMP + beta-nicotinamide D-nucleotide.. Functionally, catalyzes the formation of phosphodiester linkages between 5'-phosphoryl and 3'-hydroxyl groups in double-stranded DNA using NAD as a coenzyme and as the energy source for the reaction. This chain is DNA ligase B, found in Escherichia coli O7:K1 (strain IAI39 / ExPEC).